The following is a 61-amino-acid chain: Transmembrane protein 300R (61 aa).

Transmembrane regions (helical) follow at residues 5–25 and 35–55; these read FLDL…FYLT and SLSY…IYLQ.

The protein resides in the membrane. The polypeptide is Transmembrane protein 300R (Invertebrate iridescent virus 6 (IIV-6)).